A 339-amino-acid chain; its full sequence is Ketol-acid reductoisomerase (NADP(+)) (339 aa).

Residues 1–182 (MPNRYYEKDG…GCLKAGVIDT (182 aa)) form the KARI N-terminal Rossmann domain. NADP(+)-binding positions include 25-28 (YGSQ), Ser-51, Ser-53, and 83-86 (DHIQ). Residue His-108 is part of the active site. Residue Gly-134 participates in NADP(+) binding. The region spanning 183-328 (NFREETESDL…RELREMMTFL (146 aa)) is the KARI C-terminal knotted domain. 4 residues coordinate Mg(2+): Asp-191, Glu-195, Glu-227, and Glu-231. A substrate-binding site is contributed by Ser-252.

Belongs to the ketol-acid reductoisomerase family. Mg(2+) serves as cofactor.

It carries out the reaction (2R)-2,3-dihydroxy-3-methylbutanoate + NADP(+) = (2S)-2-acetolactate + NADPH + H(+). The enzyme catalyses (2R,3R)-2,3-dihydroxy-3-methylpentanoate + NADP(+) = (S)-2-ethyl-2-hydroxy-3-oxobutanoate + NADPH + H(+). The protein operates within amino-acid biosynthesis; L-isoleucine biosynthesis; L-isoleucine from 2-oxobutanoate: step 2/4. Its pathway is amino-acid biosynthesis; L-valine biosynthesis; L-valine from pyruvate: step 2/4. In terms of biological role, involved in the biosynthesis of branched-chain amino acids (BCAA). Catalyzes an alkyl-migration followed by a ketol-acid reduction of (S)-2-acetolactate (S2AL) to yield (R)-2,3-dihydroxy-isovalerate. In the isomerase reaction, S2AL is rearranged via a Mg-dependent methyl migration to produce 3-hydroxy-3-methyl-2-ketobutyrate (HMKB). In the reductase reaction, this 2-ketoacid undergoes a metal-dependent reduction by NADPH to yield (R)-2,3-dihydroxy-isovalerate. In Solibacter usitatus (strain Ellin6076), this protein is Ketol-acid reductoisomerase (NADP(+)).